Reading from the N-terminus, the 447-residue chain is Maltoporin (447 aa).

The first 26 residues, 1-26 (MELRMKKVSVIAAAVAATLAAGSAFA), serve as a signal peptide directing secretion.

The protein belongs to the porin LamB (TC 1.B.3) family. Homotrimer formed of three 18-stranded antiparallel beta-barrels, containing three independent channels.

Its subcellular location is the cell outer membrane. The enzyme catalyses beta-maltose(in) = beta-maltose(out). Functionally, involved in the transport of maltose and maltodextrins. The polypeptide is Maltoporin (Vibrio campbellii (strain ATCC BAA-1116)).